Here is a 545-residue protein sequence, read N- to C-terminus: CTP synthase (545 aa).

The amidoligase domain stretch occupies residues 1-266 (MTTNYIFVTG…DDYICKRFSL (266 aa)). Serine 14 contributes to the CTP binding site. Residue serine 14 participates in UTP binding. ATP is bound by residues 15–20 (SLGKGI) and aspartate 72. 2 residues coordinate Mg(2+): aspartate 72 and glutamate 140. CTP contacts are provided by residues 147–149 (DIE), 187–192 (KTKPTQ), and lysine 223. UTP is bound by residues 187 to 192 (KTKPTQ) and lysine 223. Residue 239–241 (KDV) participates in ATP binding. One can recognise a Glutamine amidotransferase type-1 domain in the interval 291-542 (TIGMIGKYVE…VKAAGEYQKR (252 aa)). Glycine 352 contacts L-glutamine. Residue cysteine 379 is the Nucleophile; for glutamine hydrolysis of the active site. L-glutamine contacts are provided by residues 380 to 383 (LGMQ), glutamate 403, and arginine 470. Catalysis depends on residues histidine 515 and glutamate 517.

It belongs to the CTP synthase family. In terms of assembly, homotetramer.

The enzyme catalyses UTP + L-glutamine + ATP + H2O = CTP + L-glutamate + ADP + phosphate + 2 H(+). It carries out the reaction L-glutamine + H2O = L-glutamate + NH4(+). It catalyses the reaction UTP + NH4(+) + ATP = CTP + ADP + phosphate + 2 H(+). Its pathway is pyrimidine metabolism; CTP biosynthesis via de novo pathway; CTP from UDP: step 2/2. Allosterically activated by GTP, when glutamine is the substrate; GTP has no effect on the reaction when ammonia is the substrate. The allosteric effector GTP functions by stabilizing the protein conformation that binds the tetrahedral intermediate(s) formed during glutamine hydrolysis. Inhibited by the product CTP, via allosteric rather than competitive inhibition. In terms of biological role, catalyzes the ATP-dependent amination of UTP to CTP with either L-glutamine or ammonia as the source of nitrogen. Regulates intracellular CTP levels through interactions with the four ribonucleotide triphosphates. This is CTP synthase from Yersinia enterocolitica serotype O:8 / biotype 1B (strain NCTC 13174 / 8081).